Consider the following 230-residue polypeptide: Large ribosomal subunit protein uL1 (230 aa).

Belongs to the universal ribosomal protein uL1 family. As to quaternary structure, part of the 50S ribosomal subunit.

Binds directly to 23S rRNA. The L1 stalk is quite mobile in the ribosome, and is involved in E site tRNA release. Its function is as follows. Protein L1 is also a translational repressor protein, it controls the translation of the L11 operon by binding to its mRNA. The polypeptide is Large ribosomal subunit protein uL1 (Leuconostoc citreum (strain KM20)).